We begin with the raw amino-acid sequence, 182 residues long: MNLSNHFLIAMPDMEDAFFSQSVVYICKHDEDGALGIAINKPSPITMDMIFSATGKNIPMRMQHDSVMMGGPVQVERGYVVHTPIGNWQSSIGVSDNIALTSSRDVIENISREGAVDKALISIGYSSWSKGQLERELADNAWLTVPADEHILFDIPYEHRYAAAFAKLGIDPLALFSGAGHA.

This sequence belongs to the UPF0301 (AlgH) family.

The chain is UPF0301 protein NMB1336 from Neisseria meningitidis serogroup B (strain ATCC BAA-335 / MC58).